We begin with the raw amino-acid sequence, 354 residues long: MSEIQLRHDWKRDEIEALFALPMNDLLFEAHSIHRQVYDPNEVQISRLLSIKTGACPEDCKYCPQSARYDTGLEKERLIEIEKVLTEARSAKAAGASRFCMGAAWRNPHARDMPYLKDMVREVKSMGMETCMTLGMLSPDQAGELAEAGLDYYNHNLDTSPEYYGDIITTRTYQDRLDTLSNVRAAGMKVCSGGIVGMGEQATDRSGLLQQLANMEQHPDSVPINMLVKVAGTPFENLEDLDPLVFVRTIAVARILMPHSRVRLSAGREKMSDEMQAMCFFAGANSIFYGCKLLTTNNPEENEDMTLFKRLGLHPEQGKYATIEDDKAVFEKATAKANAIKDKQSSAFYDAAAL.

Positions 41-265 (NEVQISRLLS…LMPHSRVRLS (225 aa)) constitute a Radical SAM core domain. Cys56, Cys60, and Cys63 together coordinate [4Fe-4S] cluster. Cys100, Cys131, Cys191, and Arg263 together coordinate [2Fe-2S] cluster.

This sequence belongs to the radical SAM superfamily. Biotin synthase family. Homodimer. [4Fe-4S] cluster serves as cofactor. Requires [2Fe-2S] cluster as cofactor.

It carries out the reaction (4R,5S)-dethiobiotin + (sulfur carrier)-SH + 2 reduced [2Fe-2S]-[ferredoxin] + 2 S-adenosyl-L-methionine = (sulfur carrier)-H + biotin + 2 5'-deoxyadenosine + 2 L-methionine + 2 oxidized [2Fe-2S]-[ferredoxin]. Its pathway is cofactor biosynthesis; biotin biosynthesis; biotin from 7,8-diaminononanoate: step 2/2. Functionally, catalyzes the conversion of dethiobiotin (DTB) to biotin by the insertion of a sulfur atom into dethiobiotin via a radical-based mechanism. This is Biotin synthase from Shewanella woodyi (strain ATCC 51908 / MS32).